The following is a 112-amino-acid chain: Secretoglobin family 2B member 24 (112 aa).

The N-terminal stretch at 1 to 23 (MKGTLLLLALLMIGELGFHTTEA) is a signal peptide.

Belongs to the secretoglobin family. In terms of tissue distribution, expressed in lacrimal gland, at higher level in males than females.

The protein localises to the secreted. The polypeptide is Secretoglobin family 2B member 24 (Scgb2b24) (Mus musculus (Mouse)).